A 581-amino-acid chain; its full sequence is Sulfate adenylyltransferase (581 aa).

The N-terminal stretch occupies residues 1 to 176 (MANAPHGGVL…VQAIQAPTHF (176 aa)). Positions 177-401 (DYVPLRYTPA…LRESYPPRPQ (225 aa)) are catalytic. Residue Gln-204 participates in sulfate binding. ATP is bound by residues 204 to 207 (QTRN) and 298 to 301 (GRDH). Active-site residues include Thr-205, Arg-206, and Asn-207. Arg-206 serves as a coordination point for sulfate. Ala-302 is a sulfate binding site. Met-340 contacts ATP. The interval 402–581 (QGFTILLTGL…IMILESQNLV (180 aa)) is allosteric regulation domain; adenylyl-sulfate kinase-like. Residues 441 to 444 (EELR), 486 to 487 (TA), and Arg-526 contribute to the 3'-phosphoadenylyl sulfate site.

In the N-terminal section; belongs to the sulfate adenylyltransferase family. It in the C-terminal section; belongs to the APS kinase family. In terms of assembly, homohexamer. Dimer of trimers.

Its subcellular location is the cytoplasm. The catalysed reaction is sulfate + ATP + H(+) = adenosine 5'-phosphosulfate + diphosphate. The protein operates within sulfur metabolism; hydrogen sulfide biosynthesis; sulfite from sulfate: step 1/3. Its activity is regulated as follows. Allosterically inhibited by 3'-phosphoadenosine 5'-phosphosulfate (PAPS). In terms of biological role, catalyzes the first intracellular reaction of sulfate assimilation, forming adenosine-5'-phosphosulfate (APS) from inorganic sulfate and ATP. Plays an important role in sulfate activation as a component of the biosynthesis pathway of sulfur-containing amino acids. The polypeptide is Sulfate adenylyltransferase (Cryptococcus neoformans var. grubii serotype A (strain H99 / ATCC 208821 / CBS 10515 / FGSC 9487) (Filobasidiella neoformans var. grubii)).